Consider the following 568-residue polypeptide: Kinetochore protein NDC80 homolog (568 aa).

Positions 1–59 (MRGGAAGKRRTTVGFGGAPPPPPPSIEQQRHLFNSRDSDASFASSRPSSIGLGGRGASD) are disordered. Positions 28–39 (QQRHLFNSRDSD) are enriched in basic and acidic residues. Low complexity predominate over residues 40-49 (ASFASSRPSS). 2 coiled-coil regions span residues 241-334 (KESL…AEVA) and 433-469 (IESKRSLLGSIQLQINDLEEKMKLVKKETQELSTKCD).

It belongs to the NDC80/HEC1 family. Component of the NDC80 complex, which consists of NDC80, NUF2, SPC24 and SPC25.

Its subcellular location is the chromosome. The protein resides in the centromere. Acts as a component of the essential kinetochore-associated NDC80 complex, which is required for chromosome segregation and spindle checkpoint activity to ensure proper cell division. The chain is Kinetochore protein NDC80 homolog from Arabidopsis thaliana (Mouse-ear cress).